The chain runs to 31 residues: Hyaluronidase (31 aa).

This sequence belongs to the glycosyl hydrolase 56 family. Post-translationally, contains 2 disulfide bonds. N-glycosylated on at least two Asn residues by identical heptasaccharide units composed of Man, GlcNAc, and Fuc residues in the molar ration of 3:2:2. Expressed by the venom gland.

It is found in the secreted. It catalyses the reaction Random hydrolysis of (1-&gt;4)-linkages between N-acetyl-beta-D-glucosamine and D-glucuronate residues in hyaluronate.. Its function is as follows. Hydrolyzes high molecular weight hyaluronic acid to produce small oligosaccharides. The chain is Hyaluronidase from Vespula maculifrons (Eastern yellow jacket).